The primary structure comprises 474 residues: Siroheme synthase (474 aa).

A precorrin-2 dehydrogenase /sirohydrochlorin ferrochelatase region spans residues 1 to 203; the sequence is MDYLPIFLKL…GRAEDAERVL (203 aa). Residues 22–23 and 43–44 each bind NAD(+); these read EV and AS. A uroporphyrinogen-III C-methyltransferase region spans residues 219–474; it reads GSVALVGAGP…QETEGRSGNG (256 aa). Proline 228 is a binding site for S-adenosyl-L-methionine. Aspartate 251 serves as the catalytic Proton acceptor. Catalysis depends on lysine 273, which acts as the Proton donor. S-adenosyl-L-methionine-binding positions include 304–306, isoleucine 309, 334–335, methionine 387, and glycine 416; these read GGD and TA.

This sequence in the N-terminal section; belongs to the precorrin-2 dehydrogenase / sirohydrochlorin ferrochelatase family. The protein in the C-terminal section; belongs to the precorrin methyltransferase family.

The catalysed reaction is uroporphyrinogen III + 2 S-adenosyl-L-methionine = precorrin-2 + 2 S-adenosyl-L-homocysteine + H(+). It carries out the reaction precorrin-2 + NAD(+) = sirohydrochlorin + NADH + 2 H(+). The enzyme catalyses siroheme + 2 H(+) = sirohydrochlorin + Fe(2+). Its pathway is cofactor biosynthesis; adenosylcobalamin biosynthesis; precorrin-2 from uroporphyrinogen III: step 1/1. It participates in cofactor biosynthesis; adenosylcobalamin biosynthesis; sirohydrochlorin from precorrin-2: step 1/1. It functions in the pathway porphyrin-containing compound metabolism; siroheme biosynthesis; precorrin-2 from uroporphyrinogen III: step 1/1. The protein operates within porphyrin-containing compound metabolism; siroheme biosynthesis; siroheme from sirohydrochlorin: step 1/1. Its pathway is porphyrin-containing compound metabolism; siroheme biosynthesis; sirohydrochlorin from precorrin-2: step 1/1. Multifunctional enzyme that catalyzes the SAM-dependent methylations of uroporphyrinogen III at position C-2 and C-7 to form precorrin-2 via precorrin-1. Then it catalyzes the NAD-dependent ring dehydrogenation of precorrin-2 to yield sirohydrochlorin. Finally, it catalyzes the ferrochelation of sirohydrochlorin to yield siroheme. The protein is Siroheme synthase of Methylococcus capsulatus (strain ATCC 33009 / NCIMB 11132 / Bath).